Consider the following 1420-residue polypeptide: DNA-directed RNA polymerase subunit beta'' (1420 aa).

The Zn(2+) site is built by Cys220, Cys295, Cys302, and Cys305.

The protein belongs to the RNA polymerase beta' chain family. RpoC2 subfamily. In plastids the minimal PEP RNA polymerase catalytic core is composed of four subunits: alpha, beta, beta', and beta''. When a (nuclear-encoded) sigma factor is associated with the core the holoenzyme is formed, which can initiate transcription. The cofactor is Zn(2+).

The protein resides in the plastid. It is found in the chloroplast. It carries out the reaction RNA(n) + a ribonucleoside 5'-triphosphate = RNA(n+1) + diphosphate. Functionally, DNA-dependent RNA polymerase catalyzes the transcription of DNA into RNA using the four ribonucleoside triphosphates as substrates. This chain is DNA-directed RNA polymerase subunit beta'', found in Adiantum capillus-veneris (Maidenhair fern).